Reading from the N-terminus, the 556-residue chain is Formate--tetrahydrofolate ligase (556 aa).

65-72 (TPAGEGKT) is a binding site for ATP.

Belongs to the formate--tetrahydrofolate ligase family.

The catalysed reaction is (6S)-5,6,7,8-tetrahydrofolate + formate + ATP = (6R)-10-formyltetrahydrofolate + ADP + phosphate. It functions in the pathway one-carbon metabolism; tetrahydrofolate interconversion. The sequence is that of Formate--tetrahydrofolate ligase from Peptoclostridium acidaminophilum (Eubacterium acidaminophilum).